The primary structure comprises 430 residues: Crotonyl-CoA carboxylase/reductase (430 aa).

It belongs to the zinc-containing alcohol dehydrogenase family. Crotonyl-CoA carboxylase/reductase subfamily. As to quaternary structure, homodimer. Despite some sequence similarity to zinc-containing alcohol dehydrogenases, this enzyme does not bind any metals. serves as cofactor.

It carries out the reaction (2S)-ethylmalonyl-CoA + NADP(+) = (2E)-butenoyl-CoA + CO2 + NADPH. The enzyme catalyses (S)-methylmalonyl-CoA + NADP(+) = acryloyl-CoA + CO2 + NADPH. The catalysed reaction is butanoyl-CoA + NADP(+) = (2E)-butenoyl-CoA + NADPH + H(+). Its function is as follows. Catalyzes the NADPH-dependent reductive carboxylation of crotonyl-CoA ((2E)-butenoyl-CoA) to (2S)-ethylmalonyl-CoA, in the presence of CO2. This is a key reaction in the ethylmalonyl-CoA pathway for acetyl-CoA assimilation required for R.sphaeroides growth on acetate as sole carbon source. Is also able to accept acryloyl-CoA as an alternative substrate, yielding (2S)-methylmalonyl-CoA. To a lesser extent, when CO2 is absent, the enzyme also catalyzes the reduction of crotonyl-CoA to butanoyl-CoA. In Cereibacter sphaeroides (strain ATCC 17023 / DSM 158 / JCM 6121 / CCUG 31486 / LMG 2827 / NBRC 12203 / NCIMB 8253 / ATH 2.4.1.) (Rhodobacter sphaeroides), this protein is Crotonyl-CoA carboxylase/reductase.